The primary structure comprises 359 residues: Phosphoserine aminotransferase (359 aa).

Residue arginine 41 coordinates L-glutamate. Residues 75–76 (AS), tryptophan 101, threonine 151, aspartate 171, and glutamine 194 contribute to the pyridoxal 5'-phosphate site. At lysine 195 the chain carries N6-(pyridoxal phosphate)lysine. 236–237 (NT) is a binding site for pyridoxal 5'-phosphate.

This sequence belongs to the class-V pyridoxal-phosphate-dependent aminotransferase family. SerC subfamily. Homodimer. Pyridoxal 5'-phosphate serves as cofactor.

The protein resides in the cytoplasm. It carries out the reaction O-phospho-L-serine + 2-oxoglutarate = 3-phosphooxypyruvate + L-glutamate. The catalysed reaction is 4-(phosphooxy)-L-threonine + 2-oxoglutarate = (R)-3-hydroxy-2-oxo-4-phosphooxybutanoate + L-glutamate. Its pathway is amino-acid biosynthesis; L-serine biosynthesis; L-serine from 3-phospho-D-glycerate: step 2/3. It functions in the pathway cofactor biosynthesis; pyridoxine 5'-phosphate biosynthesis; pyridoxine 5'-phosphate from D-erythrose 4-phosphate: step 3/5. Its function is as follows. Catalyzes the reversible conversion of 3-phosphohydroxypyruvate to phosphoserine and of 3-hydroxy-2-oxo-4-phosphonooxybutanoate to phosphohydroxythreonine. The chain is Phosphoserine aminotransferase from Thiobacillus denitrificans (strain ATCC 25259 / T1).